The following is a 490-amino-acid chain: Betaine aldehyde dehydrogenase (490 aa).

K(+)-binding residues include T26, I27, and D93. 150–152 lines the NAD(+) pocket; the sequence is GAW. K162 serves as the catalytic Charge relay system. Residue 176–179 participates in NAD(+) binding; sequence KPSE. V180 lines the K(+) pocket. 230–233 contacts NAD(+); that stretch reads GVAS. L246 is a binding site for K(+). E252 functions as the Proton acceptor in the catalytic mechanism. Residues G254, C286, and E387 each coordinate NAD(+). The active-site Nucleophile is C286. C286 bears the Cysteine sulfenic acid (-SOH) mark. K(+) contacts are provided by K457 and G460. Catalysis depends on E464, which acts as the Charge relay system.

It belongs to the aldehyde dehydrogenase family. As to quaternary structure, dimer of dimers. Requires K(+) as cofactor.

It catalyses the reaction betaine aldehyde + NAD(+) + H2O = glycine betaine + NADH + 2 H(+). The protein operates within amine and polyamine biosynthesis; betaine biosynthesis via choline pathway; betaine from betaine aldehyde: step 1/1. Involved in the biosynthesis of the osmoprotectant glycine betaine. Catalyzes the irreversible oxidation of betaine aldehyde to the corresponding acid. This chain is Betaine aldehyde dehydrogenase, found in Escherichia coli O157:H7.